Consider the following 495-residue polypeptide: MRLIVPLRGVIQGRGGLFVGSLIPCCLFYFLQLYLKRRRPPPSDPTDLPRTFSRTNLFSRGNSIGRVRVSSRAVPVAKPSDSPYYIGLERVKTDPYDRITNTDGIIQLGLAESTLCFDLLQRWMSENLMESMMQSDDGEFDISSIAMYKPFEGLLELRVAFADFMSRIMGGNVSFDPSNMVITAGGTPAIEVLAFCLADHGNAFLIPTPYYPGFDRDIKFRTGVELIPVHCRSSDNFTVTVSALEQALNQARKRGSKVSGILFSNPSNPVGNILSRETLCDILRFAQEKNIHVISDEIFAGSVYGDKEFVSMAEIAGSGEFDKTRVHIIYGLSKDLSIPGFRAGVIYSFHEDVVNAAKKLMRFSSVPVLVQRILISLLSDVRFIEGYMAAHRQRIRDKHIRFVEGLKQLGIPCAESGGGLYCWVDMSSLLTSYSEKGELELFEKLLTVAKINATPGTACYCIEPGWFRCCFTALADEDIPVIMERIRQLAESFRS.

N6-(pyridoxal phosphate)lysine is present on Lys334.

This sequence belongs to the class-I pyridoxal-phosphate-dependent aminotransferase family. As to quaternary structure, homodimer. Requires pyridoxal 5'-phosphate as cofactor. As to expression, expressed in roots. Expressed at low level in leaves, stems, flowers and siliques.

Functionally, probable aminotransferase. Does not have 1-aminocyclopropane-1-carboxylate synthase (ACS) activity, suggesting that it is not involved in ethylene biosynthesis. This Arabidopsis thaliana (Mouse-ear cress) protein is Probable aminotransferase ACS12 (ACS12).